Consider the following 206-residue polypeptide: Small ribosomal subunit protein uS4 (206 aa).

One can recognise an S4 RNA-binding domain in the interval 96–156 (TRLDNVVYRM…EKSKKQARII (61 aa)).

Belongs to the universal ribosomal protein uS4 family. In terms of assembly, part of the 30S ribosomal subunit. Contacts protein S5. The interaction surface between S4 and S5 is involved in control of translational fidelity.

Its function is as follows. One of the primary rRNA binding proteins, it binds directly to 16S rRNA where it nucleates assembly of the body of the 30S subunit. In terms of biological role, with S5 and S12 plays an important role in translational accuracy. In Shewanella woodyi (strain ATCC 51908 / MS32), this protein is Small ribosomal subunit protein uS4.